A 592-amino-acid polypeptide reads, in one-letter code: MTLFILTETSAGYALLKAKDKKLLKRDDLATEAATAEGVSNLVKLKSFQKFDSAAAALEEVASLVEGKVTPRLASLLDEIKDEKKVSLAVADPKLGNAIGKLPGLDIQLIADSTTADIYRAIREHLPTLIPGLLPQDMSTMSLGLSHSLARHKLKFSPDKIDTMIVQAIGLLDDLDKELNTYAMRVKEWYGWHFPELAKILNDNIAYARLVLKMGMRSNWETSDLAEILPEELEGPVKAAADRSMGTEISQDDLENIQALAEQVVGFAEYRQQLAGYLTARMNAIAPNLTALVGDLVGARLIAHAGSLTNLSKSPASTIQILGAEKALFRALKTKHDTPKYGLIYHASLIGQATGKNKGKMARVLAAKASLGIRVDALADWEDDATEEDKAALGTEARYNLERKLAAMEGKPLKPRGVAIAPNGASAQPKKFELNEARKYNADADALSSDEPKSKKDKKLIEEVSDEEMADADSDEEPAANGTKDDDSSDDSEEEKSKKHKSKKGKDAELEKLAERAGLSLKRYKRKLERGEITFDADGNPTAVSKKDLKKAKKEAKKASKGDEKKRKRSDDGEEVDNAEKKQKKKKKKGEE.

The 126-residue stretch at 285 to 410 (IAPNLTALVG…LERKLAAMEG (126 aa)) folds into the Nop domain. Positions 443–592 (DADALSSDEP…QKKKKKKGEE (150 aa)) are disordered. Positions 450–462 (DEPKSKKDKKLIE) are enriched in basic and acidic residues. Positions 463–478 (EVSDEEMADADSDEEP) are enriched in acidic residues. Basic and acidic residues-rich tracts occupy residues 505 to 515 (GKDAELEKLAE) and 557 to 571 (KKAS…KRSD). Over residues 582-592 (KQKKKKKKGEE) the composition is skewed to basic residues.

The protein belongs to the NOP5/NOP56 family.

The protein resides in the nucleus. Its subcellular location is the nucleolus. Its function is as follows. Required for pre-18S rRNA processing. May bind microtubules. The protein is Nucleolar protein 58 (nop58) of Aspergillus clavatus (strain ATCC 1007 / CBS 513.65 / DSM 816 / NCTC 3887 / NRRL 1 / QM 1276 / 107).